Here is a 209-residue protein sequence, read N- to C-terminus: MISPSKKRTILSSKNINQKPRAVVKGNELRSPSKRRSQIDTDYALRRSPIKTIQISKAAQFMLYEETAEERNIAVHRHNEIYNNNNSVSNENNPSQVKENLSPAKICPYERAFLREGGRIALKDLSVDEFKGYIQDPLTDETIPLTLPLGDKKISLPSFITPPRNSKISIFFTSKHQGQNPETKISRSTDDVSEKKVVRKLSFHVYEDE.

The segment at 1–38 (MISPSKKRTILSSKNINQKPRAVVKGNELRSPSKRRSQ) is disordered. Residue Ser-48 is modified to Phosphoserine. Thr-161 is modified (phosphothreonine). Ser-202 is modified (phosphoserine).

In terms of assembly, interacts with CDH1, BMH1 and BMH2.

Its function is as follows. Negative regulator of GDH1, the activator protein that regulates the ubiquitin ligase activity and substrate specificity of the anaphase promoting complex/cyclosome (APC/C), and which is required for exit from mitosis, cytokinesis and formation of prereplicative complexes in G1. This Saccharomyces cerevisiae (strain ATCC 204508 / S288c) (Baker's yeast) protein is APC/C-CDH1 modulator 1 (ACM1).